A 32-amino-acid chain; its full sequence is Tail virion protein G9P (32 aa).

The chain crosses the membrane as a helical span at residues 8–24 (FASFVLGWCLRSGITYF).

This sequence belongs to the inovirus G9P protein family.

The protein localises to the virion. It is found in the host membrane. Its function is as follows. May initiate with G7P the virion concomitant assembly-budding process, by interacting with the packaging signal of the viral genome. The assembly-budding takes place at the host inner membrane. In turn, G7P and G9P are present at the end of the filamentous virion that emerges first from the bacterial host. The chain is Tail virion protein G9P (IX) from Escherichia coli (Bacteriophage f1).